We begin with the raw amino-acid sequence, 282 residues long: Undecaprenyl-diphosphatase 1 (282 aa).

Transmembrane regions (helical) follow at residues 1–21, 46–66, 91–111, 117–137, 150–170, 193–213, 226–246, and 260–280; these read MLLLQIVVLALIQGITEVLPL, GVALDVAVHLGTLGAVALYFW, AFLVVLGTLPAVATVLLLAHF, SPGLATIGWTTLGFGLLLGVI, MGGIDCLLIGLAQCLALLPGV, FSMLLSIPAIAGAATLVGLDL, LIAAVTAFLAAFLAVAAMMAW, and VLLGAALLALAYLGPDLAPFL.

The protein belongs to the UppP family.

Its subcellular location is the cell inner membrane. The enzyme catalyses di-trans,octa-cis-undecaprenyl diphosphate + H2O = di-trans,octa-cis-undecaprenyl phosphate + phosphate + H(+). Functionally, catalyzes the dephosphorylation of undecaprenyl diphosphate (UPP). Confers resistance to bacitracin. This Rhodospirillum rubrum (strain ATCC 11170 / ATH 1.1.1 / DSM 467 / LMG 4362 / NCIMB 8255 / S1) protein is Undecaprenyl-diphosphatase 1.